Reading from the N-terminus, the 1490-residue chain is WD repeat-containing protein 7 (1490 aa).

7 WD repeats span residues Ala-17–Pro-56, Gly-62–Phe-104, Ile-156–Gln-199, Leu-324–Gly-366, Asn-404–Leu-443, Gly-462–Ile-507, and Arg-558–Cys-597. Disordered regions lie at residues Asp-761 to Ser-783 and Gly-911 to Gly-945. A compositionally biased stretch (basic and acidic residues) spans Ile-768–Ser-782. At Ser-935 the chain carries Phosphoserine. Residues Pro-936–Gly-945 are compositionally biased toward polar residues. 2 WD repeats span residues Pro-1351–Ile-1390 and Gly-1392–Ile-1432. Phosphoserine is present on Ser-1456.

This is WD repeat-containing protein 7 (WDR7) from Homo sapiens (Human).